A 634-amino-acid chain; its full sequence is Chaperone protein HtpG (634 aa).

The interval 1–342 (MTVETDKQTL…SSDLSLNVSR (342 aa)) is a; substrate-binding. Residues 343–559 (EILQSGPVVD…QGDLGLQMRQ (217 aa)) are b. The segment at 560-634 (LLEASGQAVP…LNKLLLELSV (75 aa)) is c.

The protein belongs to the heat shock protein 90 family. As to quaternary structure, homodimer.

The protein resides in the cytoplasm. Functionally, molecular chaperone. Has ATPase activity. The sequence is that of Chaperone protein HtpG from Xanthomonas euvesicatoria pv. vesicatoria (strain 85-10) (Xanthomonas campestris pv. vesicatoria).